Here is a 119-residue protein sequence, read N- to C-terminus: Large ribosomal subunit protein bL20 (119 aa).

The protein belongs to the bacterial ribosomal protein bL20 family.

Its function is as follows. Binds directly to 23S ribosomal RNA and is necessary for the in vitro assembly process of the 50S ribosomal subunit. It is not involved in the protein synthesizing functions of that subunit. This chain is Large ribosomal subunit protein bL20, found in Xylella fastidiosa (strain M12).